Reading from the N-terminus, the 361-residue chain is UDP-D-xylose:L-fucose alpha-1,3-D-xylosyltransferase 1 (361 aa).

The disordered stretch occupies residues 1 to 21; the sequence is MEQKQHILKQSTFSSSPSSYS. Residues 1-34 are Cytoplasmic-facing; sequence MEQKQHILKQSTFSSSPSSYSSISDRPISLLSRN. Residues 11–21 show a composition bias toward low complexity; that stretch reads STFSSSPSSYS. A helical; Signal-anchor for type II membrane protein transmembrane segment spans residues 35-55; that stretch reads GLLLLLLALVLLLGVLLPWPG. Residues 56–361 are Lumenal-facing; the sequence is SPLFLFPNRL…ALESPLGKLE (306 aa). N92 and N167 each carry an N-linked (GlcNAc...) asparagine glycan. A DXD motif motif is present at residues 190 to 192; the sequence is DVD. N-linked (GlcNAc...) asparagine glycans are attached at residues N222 and N286.

It belongs to the glycosyltransferase 77 family. It depends on Mn(2+) as a cofactor. Mg(2+) is required as a cofactor. In terms of processing, glycosylated. In terms of tissue distribution, expressed in roots, rosette leaves, cauline leaves and stems.

It localises to the golgi apparatus membrane. In terms of biological role, catalyzes the transfer of D-xylose from UDP-alpha-D-xylose onto L-fucose. Probably involved in the biosynthesis of rhamnogalacturonan II (RG-II) through xylosylation of the internal fucose moiety of the A-chain of RG-II, a structurally complex pectic polysaccharide of the primary cell wall. RG-II is essential for the cell wall integrity of rapidly growing tissues such as roots and pollen tube growth and elongation. The polypeptide is UDP-D-xylose:L-fucose alpha-1,3-D-xylosyltransferase 1 (Arabidopsis thaliana (Mouse-ear cress)).